The primary structure comprises 107 residues: Large ribosomal subunit protein uL18c (107 aa).

It belongs to the universal ribosomal protein uL18 family. Part of the 50S ribosomal subunit; contacts the 5S rRNA.

Its subcellular location is the plastid. The protein localises to the chloroplast. In terms of biological role, binds 5S rRNA, forms part of the central protuberance of the 50S subunit. The protein is Large ribosomal subunit protein uL18c (rpl18) of Guillardia theta (Cryptophyte).